Reading from the N-terminus, the 185-residue chain is Lysozyme g (185 aa).

Glu73 is an active-site residue.

It belongs to the glycosyl hydrolase 23 family.

The catalysed reaction is Hydrolysis of (1-&gt;4)-beta-linkages between N-acetylmuramic acid and N-acetyl-D-glucosamine residues in a peptidoglycan and between N-acetyl-D-glucosamine residues in chitodextrins.. The protein is Lysozyme g of Cyprinus carpio (Common carp).